A 385-amino-acid chain; its full sequence is UDP-N-acetylglucosamine--N-acetylmuramyl-(pentapeptide) pyrophosphoryl-undecaprenol N-acetylglucosamine transferase (385 aa).

UDP-N-acetyl-alpha-D-glucosamine-binding positions include 11–13 (TGG), asparagine 117, arginine 160, serine 215, and glutamine 317.

Belongs to the glycosyltransferase 28 family. MurG subfamily.

It is found in the cell inner membrane. The catalysed reaction is di-trans,octa-cis-undecaprenyl diphospho-N-acetyl-alpha-D-muramoyl-L-alanyl-D-glutamyl-meso-2,6-diaminopimeloyl-D-alanyl-D-alanine + UDP-N-acetyl-alpha-D-glucosamine = di-trans,octa-cis-undecaprenyl diphospho-[N-acetyl-alpha-D-glucosaminyl-(1-&gt;4)]-N-acetyl-alpha-D-muramoyl-L-alanyl-D-glutamyl-meso-2,6-diaminopimeloyl-D-alanyl-D-alanine + UDP + H(+). The protein operates within cell wall biogenesis; peptidoglycan biosynthesis. Functionally, cell wall formation. Catalyzes the transfer of a GlcNAc subunit on undecaprenyl-pyrophosphoryl-MurNAc-pentapeptide (lipid intermediate I) to form undecaprenyl-pyrophosphoryl-MurNAc-(pentapeptide)GlcNAc (lipid intermediate II). This is UDP-N-acetylglucosamine--N-acetylmuramyl-(pentapeptide) pyrophosphoryl-undecaprenol N-acetylglucosamine transferase from Rickettsia prowazekii (strain Madrid E).